The sequence spans 1193 residues: Chloride channel protein 2 (1193 aa).

Residues 1–168 (MVYFGDRQRD…WIWRHTVARL (168 aa)) are Cytoplasmic-facing. The segment at 76–97 (SHAFYPCPPPAENARDSDSSDD) is disordered. Helical transmembrane passes span 169 to 204 (GEDW…IWLY) and 213 to 236 (VQYI…VHLI). A Selectivity filter part_1 motif is present at residues 242–246 (GSGIP). Ser-243 is a binding site for chloride. Positions 245–252 (IPEMKTIL) form an intramembrane region, helical. 2 helical membrane passes run 261–279 (LTFK…TLGS) and 286–304 (EGPF…SKLV). The short motif at 284 to 288 (GKEGP) is the Selectivity filter part_2 element. 2 intramembrane regions (helical) span residues 320-332 (MLAA…VGAC) and 336-344 (PVGGVLFSI). 5 helical membrane passes run 356–373 (YWRG…FRLL), 402–430 (LFVF…VLFM), 439–458 (FLQK…VSSI), 511–530 (FGNL…IAST), and 536–555 (GMFI…VGEF). The short motif at 536-540 (GMFIP) is the Selectivity filter part_3 element. Phe-538 is a chloride binding site. The segment at residues 576-590 (GGYAVVGAAAFSGSV) is an intramembrane region (helical). The segment at residues 591 to 592 (TH) is an intramembrane region (note=Loop between two helices). The helical intramembrane region spans 593 to 604 (TVSVAVIIFEMT). The segment at residues 605 to 609 (GQITH) is an intramembrane region (note=Loop between two helices). The helical transmembrane segment at 610 to 626 (VVPVMIAVLVANAVAAL) threads the bilayer. Residues 627–1193 (LQPSIYDSII…KSNTENGNHA (567 aa)) are Cytoplasmic-facing. Position 632 (Tyr-632) interacts with chloride. The region spanning 663 to 723 (MVRDVKYIWH…KMIEKHIGRE (61 aa)) is the CBS 1 domain. Disordered regions lie at residues 848–884 (TLQD…VSKK), 1103–1122 (NSFV…AVEK), and 1159–1193 (IKHT…GNHA). The 58-residue stretch at 1048–1105 (IDPSPFQLVERTSILKVHSLFSMVGINHAYVTKIGRLVGVVGLKELRKAIEDINSNSF) folds into the CBS 2 domain. Over residues 1165–1193 (GTVSLTMPPQESKQSPSADKSNTENGNHA) the composition is skewed to polar residues.

It belongs to the chloride channel (TC 2.A.49) family. At embryonic stages 13-16, expressed in a subset of the midline cells of the midline primordium and in all of the midline glia. Expressed along the Z-line of the sarcomere in larval longitudinal muscles.

The protein resides in the membrane. Its function is as follows. Voltage-gated chloride channel. Chloride channels have several functions including the regulation of cell volume; membrane potential stabilization, signal transduction and transepithelial transport. In Drosophila melanogaster (Fruit fly), this protein is Chloride channel protein 2 (ClC-a).